A 108-amino-acid polypeptide reads, in one-letter code: UPF0145 protein YjfJ (108 aa).

Belongs to the UPF0145 family.

This is UPF0145 protein YjfJ (yjfJ) from Lactococcus lactis subsp. lactis (strain IL1403) (Streptococcus lactis).